We begin with the raw amino-acid sequence, 520 residues long: Cholesterol side-chain cleavage enzyme, mitochondrial (520 aa).

Residues 1–39 (MLVRGLPLRSVLVKGCQPLLSAPREGPGHPRVPTGEGAG) constitute a mitochondrion transit peptide. The disordered stretch occupies residues 19–47 (LLSAPREGPGHPRVPTGEGAGMSSHSPRP). C461 is a heme binding site.

Belongs to the cytochrome P450 family. In terms of assembly, interacts with FDX1/adrenodoxin. Heme is required as a cofactor.

The protein resides in the mitochondrion inner membrane. It carries out the reaction 6 reduced [adrenodoxin] + cholesterol + 3 O2 + 6 H(+) = 4-methylpentanal + pregnenolone + 6 oxidized [adrenodoxin] + 4 H2O. The catalysed reaction is 2 reduced [adrenodoxin] + cholesterol + O2 + 2 H(+) = (22R)-hydroxycholesterol + 2 oxidized [adrenodoxin] + H2O. The enzyme catalyses (22R)-hydroxycholesterol + 2 reduced [adrenodoxin] + O2 + 2 H(+) = (20R,22R)-20,22-dihydroxycholesterol + 2 oxidized [adrenodoxin] + H2O. It catalyses the reaction (20R,22R)-20,22-dihydroxycholesterol + 2 reduced [adrenodoxin] + O2 + 2 H(+) = 4-methylpentanal + pregnenolone + 2 oxidized [adrenodoxin] + 2 H2O. It participates in lipid metabolism; C21-steroid hormone metabolism. It functions in the pathway steroid metabolism; cholesterol metabolism. In terms of biological role, a cytochrome P450 monooxygenase that catalyzes the side-chain hydroxylation and cleavage of cholesterol to pregnenolone, the precursor of most steroid hormones. Catalyzes three sequential oxidation reactions of cholesterol, namely the hydroxylation at C22 followed with the hydroxylation at C20 to yield 20R,22R-hydroxycholesterol that is further cleaved between C20 and C22 to yield the C21-steroid pregnenolone and 4-methylpentanal. Mechanistically, uses molecular oxygen inserting one oxygen atom into a substrate and reducing the second into a water molecule. Two electrons are provided by NADPH via a two-protein mitochondrial transfer system comprising flavoprotein FDXR (adrenodoxin/ferredoxin reductase) and nonheme iron-sulfur protein FDX1 or FDX2 (adrenodoxin/ferredoxin). This Equus caballus (Horse) protein is Cholesterol side-chain cleavage enzyme, mitochondrial (CYP11A1).